We begin with the raw amino-acid sequence, 585 residues long: MAAPMDRTHGGRAARALRRALALASLAGLLLSGLAGALPTLGPGWRRQNPEPPASRTRSLLLDAASGQLRLEYGFHPDAVAWANLTNAIRETGWAYLDLGTNGSYNDSLQAYAAGVVEASVSEELIYMHWMNTVVNYCGPFEYEVGYCEKLKSFLEANLEWMQREMELSPDSPYWHQVRLTLLQLKGLEDSYEGRLTFPTGRFNIKPLGFLLLQISGDLEDLEPALNKTNTKPSVGSGSCSALIKLLPGSHDLLVAHNTWNSYQNMLRIIKKYRLQFREGPQEEYPLIAGNNLIFSSYPGTIFSGDDFYILGSGLVTLETTIGNKNPALWKYVQPQGCVLEWIRNIVANRLALDGATWADVFRRFNSGTYNNQWMIVDYKAFIPNGPSPGSRVLTILEQIPGMVVVADKTAELYKTTYWASYNIPYFESVFNASGLQALVAQYGDWFSYTRNPRAKIFQRDQSLVEDVDTMVRLMRYNDFLHDPLSLCEACSPKPNAENAISARSDLNPANGSYPFQALRQRAHGGIDVKVTSVALAKYMSMLAASGPTWDQLPPFQWSKSPFHNMLHMGQPDLWMFSPVKVPWD.

The N-terminal stretch at 1-35 (MAAPMDRTHGGRAARALRRALALASLAGLLLSGLA) is a signal peptide. N-linked (GlcNAc...) asparagine glycosylation is found at Asn84, Asn102, and Asn106. Cysteines 138 and 148 form a disulfide. 2 N-linked (GlcNAc...) asparagine glycosylation sites follow: Asn227 and Asn432. A disulfide bond links Cys488 and Cys491. Residue Asn511 is glycosylated (N-linked (GlcNAc...) asparagine).

This sequence belongs to the phospholipase B-like family. In terms of assembly, interacts with IGF2R. Post-translationally, glycosylated; contains mannose 6-phosphate sugars.

The protein localises to the lysosome lumen. Functionally, putative phospholipase. This is Putative phospholipase B-like 2 (Plbd2) from Rattus norvegicus (Rat).